Here is a 1039-residue protein sequence, read N- to C-terminus: Multidrug resistance protein MdtB (1039 aa).

Transmembrane regions (helical) follow at residues 15-37 (LFIM…GIIG), 345-362 (FELM…YLFL), 367-389 (ATII…MVFL), 396-418 (LTLM…VIEN), 438-460 (GEIG…PLLF), 472-494 (FAIT…TPMM), 535-557 (HPWL…WVFI), 866-888 (VWLI…ESFI), 908-930 (LMIA…IGIV), 967-989 (ILMT…GVGA), and 999-1021 (MVGG…YLLF).

The protein belongs to the resistance-nodulation-cell division (RND) (TC 2.A.6) family. MdtB subfamily. As to quaternary structure, part of a tripartite efflux system composed of MdtA, MdtB and MdtC. MdtB forms a heteromultimer with MdtC.

The protein localises to the cell inner membrane. This is Multidrug resistance protein MdtB from Shigella flexneri.